Reading from the N-terminus, the 215-residue chain is Adenylate kinase (215 aa).

Residue 10–15 participates in ATP binding; sequence GAGKGT. Residues 30–59 are NMP; the sequence is STGDMLRAAVKAETELGLKAKSVMDSGGLV. Residues T31, R36, 57–59, 85–88, and Q92 contribute to the AMP site; these read GLV and GFPR. The segment at 122-159 is LID; that stretch reads GRRVHEGSGRIYHTIFNPPKVEGIDDVTGEPLLQRKDD. Residues R123 and 132 to 133 contribute to the ATP site; that span reads IY. AMP-binding residues include R156 and R167. Residue G201 participates in ATP binding.

It belongs to the adenylate kinase family. Monomer.

The protein localises to the cytoplasm. It catalyses the reaction AMP + ATP = 2 ADP. Its pathway is purine metabolism; AMP biosynthesis via salvage pathway; AMP from ADP: step 1/1. Its function is as follows. Catalyzes the reversible transfer of the terminal phosphate group between ATP and AMP. Plays an important role in cellular energy homeostasis and in adenine nucleotide metabolism. This is Adenylate kinase from Pseudomonas syringae pv. syringae (strain B728a).